We begin with the raw amino-acid sequence, 168 residues long: CS3 fimbrial subunit A (168 aa).

The first 22 residues, 1 to 22 (MLKIKYLLIGLSLSAMSSYSLA), serve as a signal peptide directing secretion.

Post-translationally, a longer minor form, starting at amino acid 15, has been detected by amino acid sequencing. This is probably due to alternative processing of the signal peptide.

Its subcellular location is the fimbrium. Fimbriae (also called pili), polar filaments radiating from the surface of the bacterium to a length of 0.5-1.5 micrometers and numbering 100-300 per cell, enable bacteria to colonize the epithelium of specific host organs. This chain is CS3 fimbrial subunit A, found in Escherichia coli.